Here is a 611-residue protein sequence, read N- to C-terminus: Probable Xaa-Pro aminopeptidase P (611 aa).

Mn(2+) is bound by residues aspartate 408, aspartate 419, glutamate 517, and glutamate 531.

It belongs to the peptidase M24B family. Mn(2+) serves as cofactor.

The enzyme catalyses Release of any N-terminal amino acid, including proline, that is linked to proline, even from a dipeptide or tripeptide.. Functionally, catalyzes the removal of a penultimate prolyl residue from the N-termini of peptides. In Coccidioides posadasii (strain RMSCC 757 / Silveira) (Valley fever fungus), this protein is Probable Xaa-Pro aminopeptidase P (AMPP).